The primary structure comprises 221 residues: Serine/arginine-rich splicing factor 2 (221 aa).

Ser2 is subject to N-acetylserine. Ser2 bears the Phosphoserine mark. In terms of domain architecture, RRM spans 14-92 (TSLKVDNLTY…RELRVQMARY (79 aa)). Phosphothreonine occurs at positions 22 and 25. Ser26 carries the phosphoserine modification. Residue Lys52 is modified to N6-acetyllysine. Positions 92–221 (YGRPPDSHHS…SPEEEGAVSS (130 aa)) are disordered. Basic residues-rich tracts occupy residues 117 to 171 (RRSR…RSKS) and 179 to 189 (SRSRSRSRSRS). Ser189, Ser191, Ser204, Ser206, Ser208, Ser212, and Ser220 each carry phosphoserine. Positions 212 to 221 (SPEEEGAVSS) are enriched in acidic residues.

The protein belongs to the splicing factor SR family. As to quaternary structure, in vitro, self-associates and binds SRSF1/SFRS1 (ASF/SF2), SNRP70 and U2AF1 but not U2AF2. Binds SREK1/SFRS12. Interacts with CCNL1 and CCNL2. Interacts with SCAF11. Interacts with ZRSR2/U2AF1-RS2. Interacts with CCDC55 (via C-terminus). Interacts with BRDT. Extensively phosphorylated on serine residues in the RS domain. Phosphorylated by SRPK2 and this causes its redistribution from the nuclear speckle to nucleoplasm and controls cell fate decision in response to cisplatin treatment. KAT5/TIP60 inhibits its phosphorylation by preventing SRPK2 nuclear translocation. In terms of processing, acetylation on Lys-52 by KAT5/TIP60 promotes its proteasomal degradation. This effect is counterbalanced by HDAC6, which positively controls SRSF2 protein level by deacetylating it and preventing its proteasomal degradation.

The protein localises to the nucleus. It is found in the nucleoplasm. Its subcellular location is the nucleus speckle. Its function is as follows. Necessary for the splicing of pre-mRNA. It is required for formation of the earliest ATP-dependent splicing complex and interacts with spliceosomal components bound to both the 5'- and 3'-splice sites during spliceosome assembly. It also is required for ATP-dependent interactions of both U1 and U2 snRNPs with pre-mRNA. Interacts with other spliceosomal components, via the RS domains, to form a bridge between the 5'- and 3'-splice site binding components, U1 snRNP and U2AF. Binds to purine-rich RNA sequences, either 5'-AGSAGAGTA-3' (S=C or G) or 5'-GTTCGAGTA-3'. Can bind to beta-globin mRNA and commit it to the splicing pathway. The phosphorylated form (by SRPK2) is required for cellular apoptosis in response to cisplatin treatment. This chain is Serine/arginine-rich splicing factor 2 (SRSF2), found in Pan troglodytes (Chimpanzee).